The sequence spans 555 residues: uncharacterized protein (555 aa).

5 consecutive transmembrane segments (helical) span residues 13–30, 35–57, 72–91, 98–120, and 157–179; these read ALQAVVVLSLISAIGLGL, FWGVSLGVTFVFFAGILAGHFGL, LVIFVYSLGLQVGPGFFSSF, LNMLALAVVLLGTLLTVVASYAT, and TPALGCAVAYPMGVIGVILAVLL. RCK C-terminal domains are found at residues 188–273 and 282–366; these read EDLE…LFGE and KEDI…VLGN. A run of 6 helical transmembrane segments spans residues 376–398, 408–430, 437–459, 469–491, 498–517, and 532–554; these read LVVIFIGIVLGLALGAIPFSIPG, AGGPIIVGILLGTFGPRIHMITY, LMLRALGLSMYLACLGLDAGAHF, LLWIALGAGLTIIPTVLVGFVAF, FGSVSGMLCGSMANPMALNY, and ATVYPLCMFLRVIIAQVLLMFLL.

This sequence belongs to the AAE transporter (TC 2.A.81) family.

The protein resides in the cell membrane. This is an uncharacterized protein from Bacteroides thetaiotaomicron (strain ATCC 29148 / DSM 2079 / JCM 5827 / CCUG 10774 / NCTC 10582 / VPI-5482 / E50).